Here is a 318-residue protein sequence, read N- to C-terminus: Biotin synthase (318 aa).

In terms of domain architecture, Radical SAM core spans 44-273 (LCGNKFDLCT…TVQIRLAGGR (230 aa)). 3 residues coordinate [4Fe-4S] cluster: cysteine 62, cysteine 66, and cysteine 69. [2Fe-2S] cluster is bound by residues serine 106, cysteine 138, cysteine 198, and arginine 268.

Belongs to the radical SAM superfamily. Biotin synthase family. As to quaternary structure, homodimer. [4Fe-4S] cluster is required as a cofactor. Requires [2Fe-2S] cluster as cofactor.

The catalysed reaction is (4R,5S)-dethiobiotin + (sulfur carrier)-SH + 2 reduced [2Fe-2S]-[ferredoxin] + 2 S-adenosyl-L-methionine = (sulfur carrier)-H + biotin + 2 5'-deoxyadenosine + 2 L-methionine + 2 oxidized [2Fe-2S]-[ferredoxin]. It functions in the pathway cofactor biosynthesis; biotin biosynthesis; biotin from 7,8-diaminononanoate: step 2/2. Functionally, catalyzes the conversion of dethiobiotin (DTB) to biotin by the insertion of a sulfur atom into dethiobiotin via a radical-based mechanism. In Clostridium botulinum (strain Loch Maree / Type A3), this protein is Biotin synthase.